A 43-amino-acid chain; its full sequence is Defensin (43 aa).

Cystine bridges form between C3/C34, C20/C39, and C24/C41.

The protein resides in the secreted. In terms of biological role, antibacterial peptide. Affects Gram-negative bacteria including methicillin-resistant Staphylococcus aureus. In Trypoxylus dichotomus (Japanese rhinoceros beetle), this protein is Defensin.